A 503-amino-acid chain; its full sequence is Glycerol kinase (503 aa).

An ADP-binding site is contributed by Thr-12. Residues Thr-12, Thr-13, and Ser-14 each coordinate ATP. Residue Thr-12 coordinates sn-glycerol 3-phosphate. Position 16 (Arg-16) interacts with ADP. Residues Arg-82, Glu-83, Tyr-134, and Asp-243 each coordinate sn-glycerol 3-phosphate. Residues Arg-82, Glu-83, Tyr-134, Asp-243, and Gln-244 each coordinate glycerol. 2 residues coordinate ADP: Thr-265 and Gly-308. Residues Thr-265, Gly-308, Gln-312, and Gly-412 each coordinate ATP. Gly-412 contacts ADP.

The protein belongs to the FGGY kinase family.

The catalysed reaction is glycerol + ATP = sn-glycerol 3-phosphate + ADP + H(+). The protein operates within polyol metabolism; glycerol degradation via glycerol kinase pathway; sn-glycerol 3-phosphate from glycerol: step 1/1. Its activity is regulated as follows. Inhibited by fructose 1,6-bisphosphate (FBP). Functionally, key enzyme in the regulation of glycerol uptake and metabolism. Catalyzes the phosphorylation of glycerol to yield sn-glycerol 3-phosphate. This Nitrobacter hamburgensis (strain DSM 10229 / NCIMB 13809 / X14) protein is Glycerol kinase.